The following is a 210-amino-acid chain: MTGLFITLEGPEGAGKSTNRDYLAERLRSEGIEVVLTREPGGTPLAERIREVLLAPGEEQMNPDTELLLVFAARAQHLAEVIRPALARGAVVICDRFTDSTYAYQGGGRGLSLARIATLETFVQGDLRPDLTLVFDLPVEVGLARASARGRLDRFELEGQAFFDAVRTAFLTRAAAEPERYYLLDAAQPLAHVQQAIDALLPTLLERARG.

An ATP-binding site is contributed by 10–17; the sequence is GPEGAGKS.

The protein belongs to the thymidylate kinase family.

It catalyses the reaction dTMP + ATP = dTDP + ADP. Functionally, phosphorylation of dTMP to form dTDP in both de novo and salvage pathways of dTTP synthesis. This Pseudomonas fluorescens (strain SBW25) protein is Thymidylate kinase.